The chain runs to 356 residues: Protein-glutamate methylesterase/protein-glutamine glutaminase 2 (356 aa).

Positions 4–121 (KVLIVDDSAV…KGFLEESSHE (118 aa)) constitute a Response regulatory domain. D55 bears the 4-aspartylphosphate mark. The region spanning 169 to 356 (FATTERIIAI…LELIAKAICR (188 aa)) is the CheB-type methylesterase domain. Active-site residues include S181, H207, and D303.

The protein belongs to the CheB family. Phosphorylated by CheA. Phosphorylation of the N-terminal regulatory domain activates the methylesterase activity.

The protein resides in the cytoplasm. It catalyses the reaction [protein]-L-glutamate 5-O-methyl ester + H2O = L-glutamyl-[protein] + methanol + H(+). It carries out the reaction L-glutaminyl-[protein] + H2O = L-glutamyl-[protein] + NH4(+). Its function is as follows. Involved in chemotaxis. Part of a chemotaxis signal transduction system that modulates chemotaxis in response to various stimuli. Catalyzes the demethylation of specific methylglutamate residues introduced into the chemoreceptors (methyl-accepting chemotaxis proteins or MCP) by CheR. Also mediates the irreversible deamidation of specific glutamine residues to glutamic acid. The sequence is that of Protein-glutamate methylesterase/protein-glutamine glutaminase 2 from Chromobacterium violaceum (strain ATCC 12472 / DSM 30191 / JCM 1249 / CCUG 213 / NBRC 12614 / NCIMB 9131 / NCTC 9757 / MK).